Consider the following 321-residue polypeptide: tRNA U34 carboxymethyltransferase (321 aa).

Carboxy-S-adenosyl-L-methionine contacts are provided by residues K90, W104, K109, G129, 151–153 (DPT), 180–181 (IE), M195, Y199, and R314.

It belongs to the class I-like SAM-binding methyltransferase superfamily. CmoB family. Homotetramer.

It catalyses the reaction carboxy-S-adenosyl-L-methionine + 5-hydroxyuridine(34) in tRNA = 5-carboxymethoxyuridine(34) in tRNA + S-adenosyl-L-homocysteine + H(+). Functionally, catalyzes carboxymethyl transfer from carboxy-S-adenosyl-L-methionine (Cx-SAM) to 5-hydroxyuridine (ho5U) to form 5-carboxymethoxyuridine (cmo5U) at position 34 in tRNAs. This chain is tRNA U34 carboxymethyltransferase, found in Actinobacillus succinogenes (strain ATCC 55618 / DSM 22257 / CCUG 43843 / 130Z).